Here is a 131-residue protein sequence, read N- to C-terminus: Fumarate reductase subunit C (131 aa).

A run of 3 helical transmembrane segments spans residues 30–50, 63–83, and 109–129; these read EGTAVPAVWFSIELIFGLFAL, FLQNPVIVIINLITLAAALLH, and IIKSLWAVTVVATIVILFVAL.

This sequence belongs to the FrdC family. In terms of assembly, part of an enzyme complex containing four subunits: a flavoprotein (FrdA), an iron-sulfur protein (FrdB), and two hydrophobic anchor proteins (FrdC and FrdD).

The protein resides in the cell inner membrane. Two distinct, membrane-bound, FAD-containing enzymes are responsible for the catalysis of fumarate and succinate interconversion; fumarate reductase is used in anaerobic growth, and succinate dehydrogenase is used in aerobic growth. Anchors the catalytic components of the fumarate reductase complex to the cell inner membrane, binds quinones. The sequence is that of Fumarate reductase subunit C from Shigella boydii serotype 18 (strain CDC 3083-94 / BS512).